The primary structure comprises 276 residues: Malectin-A (276 aa).

The first 26 residues, 1 to 26, serve as a signal peptide directing secretion; the sequence is MLSIRTVLGPLATILLTVLGPFGAHG. Over 27 to 253 the chain is Lumenal; the sequence is SGLADKVIWA…TPNPYASDNS (227 aa). Residues tyrosine 67, tyrosine 89, tyrosine 116, phenylalanine 117, and aspartate 186 each coordinate a carbohydrate. The interval 204 to 247 is disordered; the sequence is PMLQPHPGLEKKEEEEEEEEEEGSTSKKQINKNRVQSGPRTPNP. Over residues 216–226 the composition is skewed to acidic residues; the sequence is EEEEEEEEEEG. Residues 229–247 are compositionally biased toward polar residues; it reads SKKQINKNRVQSGPRTPNP. Asparagine 252 carries an N-linked (GlcNAc...) asparagine glycan. Residues 254-274 form a helical membrane-spanning segment; the sequence is SLMFPILVAFGVFIPTLFCLC. Over 275–276 the chain is Cytoplasmic; sequence RL.

This sequence belongs to the malectin family. Widely expressed throughout development including the anterior neuroectoderm and neural crest at stages 18 and 20, and the retina, hatching gland, otic vesicle, epibranchial placodes, pronephros and tail tip of later states. At stage 41, expressed in the liver, pancreas, branchial arches and proctodeum. Expressed broadly in adults in fat, intestine, gall bladder, eye, muscle, kidney, stomach, liver, heart, pancreas and lung.

It localises to the endoplasmic reticulum membrane. In terms of biological role, carbohydrate-binding protein with a strong ligand preference for Glc2-N-glycan. May play a role in the early steps of protein N-glycosylation. Can bind di- or higher oligomers but not monomers of glucose, including maltose, maltotriose, maltotetraose, maltoheptaose, nigerose, kojibose, cellobiose and isomaltose, although based on their subcellular locations, these are unlikely to all be physiological ligands. This is Malectin-A from Xenopus laevis (African clawed frog).